A 370-amino-acid chain; its full sequence is Peptidyl-prolyl cis-trans isomerase D (370 aa).

Ser5 carries the phosphoserine modification. The 165-residue stretch at 19 to 183 folds into the PPIase cyclophilin-type domain; the sequence is FFDVDIGGER…KLCVIAECGE (165 aa). Lys171 carries the post-translational modification N6-acetyllysine. The chaperone activity stretch occupies residues 185–215; sequence KEGDDWGIFPKDGSGDSHPDFPEDADIDLKD. Phosphoserine is present on Ser198. An interaction with HSP90AB1 region spans residues 214-370; sequence KDVDKILLIS…EKAVYAKMFA (157 aa). TPR repeat units follow at residues 223-256, 273-306, and 307-340; these read SEDL…VDSS, LSCV…DPSN, and TKAL…APGD.

This sequence belongs to the cyclophilin-type PPIase family. PPIase D subfamily. In terms of assembly, identified in ESR1 or NR3C1/GCR steroid receptor-chaperone complexes. Found in HSP90 chaperone complexes with kinase clients LCK or EIF2AK1. Two monomers associate with one HSP90 homodimer. Interacts with HSP90AA1. Interacts with HSP90AB1; PPID and FKBP4 compete for binding to HSP90AB1 and the interaction is mutually exclusive with the PPID:HSPA8 interaction. Interacts with HSPA8; PPID and STIP1 but not FKBP4 compete for binding to HSPA8 and the interaction is mutually exclusive with the PPID:HSP90AB1 interaction. Interacts with S100A1 and S100A2; the interactions dissociate the PPID:HSP90AA1 interaction. Interacts with S100A6. Interacts with MYB, ILF2, XRCC6, RACK1 and RPS3. Interacts with cytoplasmic dynein 1 intermediate chain (DYNC1I1 or DYNC1I2).

Its subcellular location is the cytoplasm. It is found in the nucleus. The protein localises to the nucleolus. The protein resides in the nucleoplasm. It catalyses the reaction [protein]-peptidylproline (omega=180) = [protein]-peptidylproline (omega=0). With respect to regulation, less sensitive to inhibition by cyclosporin A than is CYP-18. Its function is as follows. PPIase that catalyzes the cis-trans isomerization of proline imidic peptide bonds in oligopeptides and may therefore assist protein folding. Proposed to act as a co-chaperone in HSP90 complexes such as in unligated steroid receptors heterocomplexes. Different co-chaperones seem to compete for association with HSP90 thus establishing distinct HSP90-co-chaperone-receptor complexes with the potential to exert tissue-specific receptor activity control. May have a preference for estrogen receptor complexes and is not found in glucocorticoid receptor complexes. May be involved in cytoplasmic dynein-dependent movement of the receptor from the cytoplasm to the nucleus. May regulate MYB by inhibiting its DNA-binding activity. Involved in regulation of AHR signaling by promoting the formation of the AHR:ARNT dimer; the function is independent of HSP90 but requires the chaperone activity region. Involved in regulation of UV radiation-induced apoptosis. In Mus musculus (Mouse), this protein is Peptidyl-prolyl cis-trans isomerase D.